We begin with the raw amino-acid sequence, 262 residues long: MIDKSAFVHPTAIVEEGASIGANAHIGPFCIVGPHVEIGEGTVLKSHVVVNGHTKIGRDNEIYQFASIGEVNQDLKYAGEPTRVEIGDRNRIRESVTIHRGTVQGGGLTKVGSDNLLMINAHIAHDCTVGNRCILANNATLAGHVSVDDFAIIGGMAAVHQFCIIGAHVMVGGCSGVAQDVPPYVIAQGNHATPFGVNIEGLKRRGFSREAITAIRNAYKLIYRSGKTLDEVKPEIAELAETYPEVKAFTDFFARSTRGLIR.

It belongs to the transferase hexapeptide repeat family. LpxA subfamily. In terms of assembly, homotrimer.

It is found in the cytoplasm. The catalysed reaction is a (3R)-hydroxyacyl-[ACP] + UDP-N-acetyl-alpha-D-glucosamine = a UDP-3-O-[(3R)-3-hydroxyacyl]-N-acetyl-alpha-D-glucosamine + holo-[ACP]. It functions in the pathway glycolipid biosynthesis; lipid IV(A) biosynthesis; lipid IV(A) from (3R)-3-hydroxytetradecanoyl-[acyl-carrier-protein] and UDP-N-acetyl-alpha-D-glucosamine: step 1/6. Involved in the biosynthesis of lipid A, a phosphorylated glycolipid that anchors the lipopolysaccharide to the outer membrane of the cell. In Escherichia coli O157:H7, this protein is Acyl-[acyl-carrier-protein]--UDP-N-acetylglucosamine O-acyltransferase.